Consider the following 393-residue polypeptide: Protein TsgA (393 aa).

The next 12 helical transmembrane spans lie at 11–31, 51–71, 78–98, 101–121, 134–154, 162–182, 206–226, 245–265, 273–293, 298–318, 332–352, and 361–381; these read WISF…GMVM, FLNA…EIIP, FGFI…SLAL, AAMF…TFLI, LLFT…VAAF, WYWV…LTFG, IGVL…LGFI, ALVS…SFIL, ILTV…TGTQ, WFIL…ITLG, FILT…GPIV, and LLTA…LGFV.

The protein belongs to the major facilitator superfamily. TsgA family.

It is found in the cell inner membrane. The protein is Protein TsgA of Salmonella paratyphi B (strain ATCC BAA-1250 / SPB7).